We begin with the raw amino-acid sequence, 331 residues long: 3-dehydroquinate synthase homolog (331 aa).

The protein belongs to the archaeal-type DHQ synthase family.

The polypeptide is 3-dehydroquinate synthase homolog (Persephonella marina (strain DSM 14350 / EX-H1)).